We begin with the raw amino-acid sequence, 75 residues long: Small ribosomal subunit protein bS16 (75 aa).

This sequence belongs to the bacterial ribosomal protein bS16 family.

In Helicobacter pylori (strain G27), this protein is Small ribosomal subunit protein bS16.